A 254-amino-acid chain; its full sequence is 14-3-3 protein 2 (254 aa).

The protein belongs to the 14-3-3 family. Homodimer.

The polypeptide is 14-3-3 protein 2 (TFT2) (Solanum lycopersicum (Tomato)).